The primary structure comprises 231 residues: NAD(+) ADP-ribosyltransferase (231 aa).

It carries out the reaction NAD(+) + (ADP-D-ribosyl)n-acceptor = nicotinamide + (ADP-D-ribosyl)n+1-acceptor + H(+).. With respect to regulation, activity increases up to 5-6 times with Mg(2+) at 50 uM or higher ion concentration. 3-aminobenzamide (3-ABA) inhibits the activity by up to half and nicotinamide to a lesser extent. Zn(2+) inhibits the activity to half-maximal rate but at 500 uM concentration of the ion. Catalyzes auto- and hetero-ADP ribosylation and produces short oligomers by elongating the ADP-ribose chain (up to 6-mer). Binds DNA non-specifically but with high affinity. Forms very stable complexes with circular DNA wherein the circular DNA confers thermostability compared to linear DNA. The sequence is that of NAD(+) ADP-ribosyltransferase from Saccharolobus solfataricus (Sulfolobus solfataricus).